Reading from the N-terminus, the 254-residue chain is 3-dehydroquinate dehydratase (254 aa).

Residues 47–49 (EFR) and R83 contribute to the 3-dehydroquinate site. Catalysis depends on H144, which acts as the Proton donor/acceptor. The Schiff-base intermediate with substrate role is filled by K171. 3 residues coordinate 3-dehydroquinate: R213, S232, and Q236.

It belongs to the type-I 3-dehydroquinase family. As to quaternary structure, homodimer.

It carries out the reaction 3-dehydroquinate = 3-dehydroshikimate + H2O. Its pathway is metabolic intermediate biosynthesis; chorismate biosynthesis; chorismate from D-erythrose 4-phosphate and phosphoenolpyruvate: step 3/7. Functionally, involved in the third step of the chorismate pathway, which leads to the biosynthesis of aromatic amino acids. Catalyzes the cis-dehydration of 3-dehydroquinate (DHQ) and introduces the first double bond of the aromatic ring to yield 3-dehydroshikimate. In Neisseria meningitidis serogroup C / serotype 2a (strain ATCC 700532 / DSM 15464 / FAM18), this protein is 3-dehydroquinate dehydratase.